The sequence spans 371 residues: Protein IQ-DOMAIN 7 (371 aa).

Residues 1 to 32 (MGGSGNWIRSLISNRKPVNDQQEKLSDKSSKK) are disordered. Residues 17–29 (PVNDQQEKLSDKS) show a composition bias toward basic and acidic residues. IQ domains follow at residues 93 to 121 (REWA…AVVR) and 122 to 144 (IQAI…CMQA). The tract at residues 125 to 141 (IFRGRQVRKQAAVTLRC) is calmodulin-binding. Disordered stretches follow at residues 285 to 308 (SGMS…PVAF) and 327 to 371 (LTQS…SQRS). Composition is skewed to polar residues over residues 297-308 (STSSTSQSPVAF) and 327-341 (LTQS…SGLS).

The protein belongs to the IQD family. In terms of assembly, binds to multiple calmodulin (CaM) in the presence of Ca(2+) and CaM-like proteins.

It is found in the nucleus. Its subcellular location is the nucleus envelope. It localises to the cytoplasm. The protein localises to the cytoskeleton. May be involved in cooperative interactions with calmodulins or calmodulin-like proteins. Recruits calmodulin proteins to microtubules, thus being a potential scaffold in cellular signaling and trafficking. May associate with nucleic acids and regulate gene expression at the transcriptional or post-transcriptional level. The polypeptide is Protein IQ-DOMAIN 7 (Arabidopsis thaliana (Mouse-ear cress)).